A 919-amino-acid chain; its full sequence is Chaperone protein ClpC2, chloroplastic (919 aa).

The transit peptide at 1-54 (MAGTLLQPVALGTTFAGRVSGQRWKSHGTRRPPSMLAMSLSRPVKMAAFVGLRS) directs the protein to the chloroplast. The Clp R domain occupies 89 to 231 (FERFTEKAIK…RTQVIRMIGE (143 aa)). Repeat regions lie at residues 92–157 (FTEK…IGRG) and 167–231 (FTPR…MIGE). The segment at 252 to 499 (LEEYGTNLTK…RVRLRHAQVP (248 aa)) is i. 297 to 304 (GEPGVGKT) serves as a coordination point for ATP. In terms of domain architecture, UVR spans 506–541 (DKELKQITKDKNEAVRSQDFEKAGELRDREMELKAQ). An II region spans residues 566 to 757 (VNEADIQHIV…LLIMTSNVGS (192 aa)). 640-647 (GPTGVGKS) serves as a coordination point for ATP.

The protein belongs to the ClpA/ClpB family. ClpC subfamily.

The protein localises to the plastid. It is found in the chloroplast. Molecular chaperone that may interact with a ClpP-like protease involved in degradation of denatured proteins in the chloroplast. This chain is Chaperone protein ClpC2, chloroplastic (CLPC2), found in Oryza sativa subsp. japonica (Rice).